A 125-amino-acid polypeptide reads, in one-letter code: Calcitonin gene-related peptide 1 (125 aa).

Positions 1-25 (MVMLKISSFLAVYALVVCQMDSFQA) are cleaved as a signal peptide. Residues 26–77 (APVRPGLESITDRVTLSDYEARRLLNALVKDFIQMTAEELEQASEGNSVTAQ) constitute a propeptide that is removed on maturation. C81 and C86 are disulfide-bonded. Residue F116 is modified to Phenylalanine amide. The propeptide occupies 122–125 (SVQI).

It belongs to the calcitonin family.

Its subcellular location is the secreted. Functionally, CGRP1/CALCA is a peptide hormone that induces vasodilation mediated by the CALCRL-RAMP1 receptor complex. Dilates a variety of vessels including the coronary, cerebral and systemic vasculature. Its abundance in the CNS also points toward a neurotransmitter or neuromodulator role. It also elevates platelet cAMP. CGRP1 can also bind and activate CALCR-RAMP1 (AMYR1) receptor complex. The sequence is that of Calcitonin gene-related peptide 1 (CALCA) from Gallus gallus (Chicken).